Here is a 426-residue protein sequence, read N- to C-terminus: MSAPLAEVDPDIAELLAKELGRQRDTLEMIASENFAPRAVLQAQGSVLTNKYAEGLPGRRYYGGCEHVDVVENLARDRAKALFGAEFANVQPHSGAQANAAVLHALMSPGERLLGLDLANGGHLTHGMRLNFSGKLYENGFYGVDPATHLIDMDAVRATALEFRPKVIIAGWSAYPRVLDFAAFRSIADEVGAKLLVDMAHFAGLVAAGLHPSPVPHADVVSTTVHKTLGGGRSGLIVGKQQYAKAINSAVFPGQQGGPLMHVIAGKAVALKIAATPEFADRQRRTLSGARIIADRLMAPDVAKAGVSVVSGGTDVHLVLVDLRDSPLDGQAAEDLLHEVGITVNRNAVPNDPRPPMVTSGLRIGTPALATRGFGDTEFTEVADIIATALATGSSVDVSALKDRATRLARAFPLYDGLEEWSLVGR.

Residues L118 and 122–124 contribute to the (6S)-5,6,7,8-tetrahydrofolate site; that span reads GHL. N6-(pyridoxal phosphate)lysine is present on K227.

It belongs to the SHMT family. In terms of assembly, homodimer. Pyridoxal 5'-phosphate is required as a cofactor.

It is found in the cytoplasm. The enzyme catalyses (6R)-5,10-methylene-5,6,7,8-tetrahydrofolate + glycine + H2O = (6S)-5,6,7,8-tetrahydrofolate + L-serine. The protein operates within one-carbon metabolism; tetrahydrofolate interconversion. It participates in amino-acid biosynthesis; glycine biosynthesis; glycine from L-serine: step 1/1. Its function is as follows. Catalyzes the reversible interconversion of serine and glycine with tetrahydrofolate (THF) serving as the one-carbon carrier. This reaction serves as the major source of one-carbon groups required for the biosynthesis of purines, thymidylate, methionine, and other important biomolecules. Also exhibits THF-independent aldolase activity toward beta-hydroxyamino acids, producing glycine and aldehydes, via a retro-aldol mechanism. In Mycobacterium bovis (strain ATCC BAA-935 / AF2122/97), this protein is Serine hydroxymethyltransferase 1.